Here is a 732-residue protein sequence, read N- to C-terminus: Zinc-exporting P-type ATPase (732 aa).

One can recognise an HMA domain in the interval 29–96 (GRMRVRADWV…AIGGAKHVAA (68 aa)). The next 6 membrane-spanning stretches (helical) occupy residues 105-123 (HSTE…GGAA), 146-164 (MVAT…RGAL), 172-186 (AGTD…IASL), 195-209 (LTVL…YLQD), 342-366 (VGEN…LVTG), and 372-390 (MTML…TPTA). The active-site 4-aspartylphosphate intermediate is the D423. Residues D423, T425, and D625 each contribute to the Mg(2+) site. The next 2 membrane-spanning stretches (helical) occupy residues 676–695 (AVDV…AAGL) and 705–724 (PVLA…ANSS).

The protein belongs to the cation transport ATPase (P-type) (TC 3.A.3) family. Type IB subfamily.

The protein resides in the cell membrane. The enzyme catalyses Zn(2+)(in) + ATP + H2O = Zn(2+)(out) + ADP + phosphate + H(+). Its function is as follows. Zn(2+) efflux transporter which is involved in detoxification of zinc during infection. The polypeptide is Zinc-exporting P-type ATPase (Mycobacterium marinum (strain ATCC BAA-535 / M)).